The chain runs to 164 residues: Zinc finger A20 and AN1 domain-containing stress-associated protein 1 (164 aa).

The A20-type zinc-finger motif lies at 16-50; the sequence is APEITLCANSCGFPGNPATQNLCQNCFLAATASTS. Zn(2+) is bound by residues Cys-22, Cys-26, Cys-38, and Cys-41. Residues 48–58 are compositionally biased toward low complexity; that stretch reads STSSPSSLSSP. The segment at 48–81 is disordered; sequence STSSPSSLSSPVLDKQPPRPAAPLVEPQAPLPPP. The AN1-type zinc-finger motif lies at 99–145; it reads TSAVNRCSRCRKRVGLTGFRCRCGHLFCGEHRYSDRHGCSYDYKSAA. Zn(2+)-binding residues include Cys-105, Cys-108, Cys-119, Cys-121, Cys-126, His-129, His-135, and Cys-137.

May be involved in environmental stress response. This Oryza sativa subsp. indica (Rice) protein is Zinc finger A20 and AN1 domain-containing stress-associated protein 1 (SAP1).